A 252-amino-acid chain; its full sequence is Chitooligosaccharide deacetylase (252 aa).

The Mg(2+) site is built by His61 and His125.

Belongs to the YdjC deacetylase family. ChbG subfamily. As to quaternary structure, homodimer. Mg(2+) is required as a cofactor.

It localises to the cytoplasm. The catalysed reaction is N,N'-diacetylchitobiose + H2O = N-acetyl-beta-D-glucosaminyl-(1-&gt;4)-D-glucosamine + acetate. It catalyses the reaction diacetylchitobiose-6'-phosphate + H2O = N'-monoacetylchitobiose-6'-phosphate + acetate. Its pathway is glycan degradation; chitin degradation. Functionally, involved in the degradation of chitin. ChbG is essential for growth on the acetylated chitooligosaccharides chitobiose and chitotriose but is dispensable for growth on cellobiose and chitosan dimer, the deacetylated form of chitobiose. Deacetylation of chitobiose-6-P and chitotriose-6-P is necessary for both the activation of the chb promoter by the regulatory protein ChbR and the hydrolysis of phosphorylated beta-glucosides by the phospho-beta-glucosidase ChbF. Catalyzes the removal of only one acetyl group from chitobiose-6-P to yield monoacetylchitobiose-6-P, the inducer of ChbR and the substrate of ChbF. This Salmonella typhi protein is Chitooligosaccharide deacetylase.